The following is a 37-amino-acid chain: MKVRASVKKMCRNCKIIRRNGAIRVICTEPRHKQRQG.

It belongs to the bacterial ribosomal protein bL36 family.

In Chromohalobacter salexigens (strain ATCC BAA-138 / DSM 3043 / CIP 106854 / NCIMB 13768 / 1H11), this protein is Large ribosomal subunit protein bL36.